A 163-amino-acid polypeptide reads, in one-letter code: ATP synthase subunit b' (163 aa).

A helical membrane pass occupies residues 28-45 (LMAIQFLLLALILNATLY).

Belongs to the ATPase B chain family. In terms of assembly, F-type ATPases have 2 components, F(1) - the catalytic core - and F(0) - the membrane proton channel. F(1) has five subunits: alpha(3), beta(3), gamma(1), delta(1), epsilon(1). F(0) has four main subunits: a(1), b(1), b'(1) and c(10-14). The alpha and beta chains form an alternating ring which encloses part of the gamma chain. F(1) is attached to F(0) by a central stalk formed by the gamma and epsilon chains, while a peripheral stalk is formed by the delta, b and b' chains.

The protein resides in the cellular thylakoid membrane. F(1)F(0) ATP synthase produces ATP from ADP in the presence of a proton or sodium gradient. F-type ATPases consist of two structural domains, F(1) containing the extramembraneous catalytic core and F(0) containing the membrane proton channel, linked together by a central stalk and a peripheral stalk. During catalysis, ATP synthesis in the catalytic domain of F(1) is coupled via a rotary mechanism of the central stalk subunits to proton translocation. Its function is as follows. Component of the F(0) channel, it forms part of the peripheral stalk, linking F(1) to F(0). The b'-subunit is a diverged and duplicated form of b found in plants and photosynthetic bacteria. The sequence is that of ATP synthase subunit b' from Nostoc sp. (strain PCC 7120 / SAG 25.82 / UTEX 2576).